The sequence spans 152 residues: Ubiquitin-conjugating enzyme E2 1 (152 aa).

The UBC core domain occupies 4–150 (PARKRLMRDF…VRDVVEQSWT (147 aa)). Cysteine 88 serves as the catalytic Glycyl thioester intermediate. Residues 119–152 (NSPANSEAARMYSESKREYNRRVRDVVEQSWTAD) are disordered. The segment covering 131–145 (SESKREYNRRVRDVV) has biased composition (basic and acidic residues).

This sequence belongs to the ubiquitin-conjugating enzyme family. In terms of tissue distribution, ubiquitously expressed.

It catalyses the reaction S-ubiquitinyl-[E1 ubiquitin-activating enzyme]-L-cysteine + [E2 ubiquitin-conjugating enzyme]-L-cysteine = [E1 ubiquitin-activating enzyme]-L-cysteine + S-ubiquitinyl-[E2 ubiquitin-conjugating enzyme]-L-cysteine.. Its pathway is protein modification; protein ubiquitination. In terms of biological role, accepts the ubiquitin from the E1 complex and catalyzes its covalent attachment to other proteins. This is Ubiquitin-conjugating enzyme E2 1 (UBC1) from Arabidopsis thaliana (Mouse-ear cress).